A 297-amino-acid chain; its full sequence is 4-hydroxy-tetrahydrodipicolinate synthase (297 aa).

Thr49 is a binding site for pyruvate. The active-site Proton donor/acceptor is the Tyr137. Lys166 (schiff-base intermediate with substrate) is an active-site residue. Pyruvate is bound at residue Ile208.

Belongs to the DapA family. In terms of assembly, homotetramer; dimer of dimers.

The protein resides in the cytoplasm. The enzyme catalyses L-aspartate 4-semialdehyde + pyruvate = (2S,4S)-4-hydroxy-2,3,4,5-tetrahydrodipicolinate + H2O + H(+). The protein operates within amino-acid biosynthesis; L-lysine biosynthesis via DAP pathway; (S)-tetrahydrodipicolinate from L-aspartate: step 3/4. Its function is as follows. Catalyzes the condensation of (S)-aspartate-beta-semialdehyde [(S)-ASA] and pyruvate to 4-hydroxy-tetrahydrodipicolinate (HTPA). In Chlorobium phaeobacteroides (strain BS1), this protein is 4-hydroxy-tetrahydrodipicolinate synthase.